The primary structure comprises 941 residues: Isoleucine--tRNA ligase (941 aa).

The 'HIGH' region signature appears at 58–68 (PYANGNIHIGH). Position 564 (Glu564) interacts with L-isoleucyl-5'-AMP. Positions 605-609 (KMSKS) match the 'KMSKS' region motif. Lys608 is an ATP binding site. The Zn(2+) site is built by Cys904, Cys907, Cys924, and Cys927.

This sequence belongs to the class-I aminoacyl-tRNA synthetase family. IleS type 1 subfamily. Monomer. Requires Zn(2+) as cofactor.

It localises to the cytoplasm. The catalysed reaction is tRNA(Ile) + L-isoleucine + ATP = L-isoleucyl-tRNA(Ile) + AMP + diphosphate. Functionally, catalyzes the attachment of isoleucine to tRNA(Ile). As IleRS can inadvertently accommodate and process structurally similar amino acids such as valine, to avoid such errors it has two additional distinct tRNA(Ile)-dependent editing activities. One activity is designated as 'pretransfer' editing and involves the hydrolysis of activated Val-AMP. The other activity is designated 'posttransfer' editing and involves deacylation of mischarged Val-tRNA(Ile). This Buchnera aphidicola subsp. Cinara cedri (strain Cc) protein is Isoleucine--tRNA ligase.